We begin with the raw amino-acid sequence, 511 residues long: Protein HESO1 (511 aa).

A disordered region spans residues 378–511 (ARPQNQQMQQ…GQIWRPRHEQ (134 aa)). Positions 381–392 (QNQQMQQNWSQS) are enriched in low complexity. Polar residues predominate over residues 404–465 (LTQSRPQQNW…TSAGSSQNQG (62 aa)).

Belongs to the DNA polymerase type-B-like family.

The protein localises to the cytoplasm. Its subcellular location is the P-body. It is found in the nucleus. It catalyses the reaction RNA(n) + UTP = RNA(n)-3'-uridine ribonucleotide + diphosphate. Completely inhibited by 2'-O-methylation on the substrate RNA. Uridylates small RNAs to trigger their degradation. Catalyzes the uridylation of 5' fragments produced by AGO1-mediated cleavage of miRNA target RNAs. Acts synergistically with URT1 in unmethylated miRNA uridylation, leading to their degradation. URT1 and HESO1 prefer substrates with different 3' end nucleotides and act cooperatively to tail different forms of the same miRNAs. URT1 and HESO1 act sequentially, with URT1 mono-uridylating the miRNAs followed by their further uridylation by HESO1. URT1 and HESO1 are involved in the uridylation and clearance of RISC-generated 5' mRNA fragments. Able to act on AGO1-bound miRNAs and the uridylated species stay associated with AGO1. This Arabidopsis thaliana (Mouse-ear cress) protein is Protein HESO1.